The sequence spans 417 residues: DNA primase small subunit (417 aa).

M1 carries the N-acetylmethionine modification. Catalysis depends on residues E44, D109, and D111. Residues D109 and D111 each coordinate Mg(2+). The Mn(2+) site is built by D109 and D111. 109-111 (DID) lines the a ribonucleoside 5'-triphosphate pocket. The Zn(2+) site is built by C121, C122, C128, and C131. A Zinc knuckle motif motif is present at residues 121–131 (CCSSADICSKC). 160–166 (SGRRGVH) lines the a ribonucleoside 5'-triphosphate pocket. Position 305 (D305) interacts with Mg(2+). D305 is a binding site for Mn(2+). Residues 314 to 317 (HLLK) and H323 each bind a ribonucleoside 5'-triphosphate.

Belongs to the eukaryotic-type primase small subunit family. Heterodimer of a catalytic subunit PRIM1 and a regulatory subunit PRIM2, also known as the DNA primase complex. Interacts with PRIM2/p58 (via C-terminus). Component of the alpha DNA polymerase complex (also known as the alpha DNA polymerase-primase complex) consisting of four subunits: the catalytic subunit POLA1, the regulatory subunit POLA2, and the primase complex subunits PRIM1 and PRIM2 respectively. Within the complex, POLA1 directly interacts with PRIM2. The cofactor is Mg(2+). It depends on Mn(2+) as a cofactor.

The catalysed reaction is ssDNA + n NTP = ssDNA/pppN(pN)n-1 hybrid + (n-1) diphosphate.. The presence of the regulatory subunit PRIM2/p58 accelerates the kinetics of initiation and primer extension. Catalytic subunit of the DNA primase complex and component of the DNA polymerase alpha complex (also known as the alpha DNA polymerase-primase complex) which play an essential role in the initiation of DNA synthesis. During the S phase of the cell cycle, the DNA polymerase alpha complex (composed of a catalytic subunit POLA1, an accessory subunit POLA2 and two primase subunits, the catalytic subunit PRIM1 and the regulatory subunit PRIM2) is recruited to DNA at the replicative forks via direct interactions with MCM10 and WDHD1. The primase subunit of the polymerase alpha complex initiates DNA synthesis by oligomerising short RNA primers on both leading and lagging strands. These primers are initially extended by the polymerase alpha catalytic subunit and subsequently transferred to polymerase delta and polymerase epsilon for processive synthesis on the lagging and leading strand, respectively. In the primase complex, both subunits are necessary for the initial di-nucleotide formation, but the extension of the primer depends only on the catalytic subunit. Can add both ribo- and deoxynucleotides during elongation of the primers. Synthesizes 9-mer RNA primers (also known as the 'unit length' RNA primers). Incorporates only ribonucleotides in the presence of ribo- and deoxy-nucleotide triphosphates (rNTPs, dNTPs). Requires template thymine or cytidine to start the RNA primer synthesis, with an adenine or guanine at its 5'-end. Binds single stranded DNA. The protein is DNA primase small subunit (Prim1) of Mus musculus (Mouse).